We begin with the raw amino-acid sequence, 379 residues long: ATP-sensitive inward rectifier potassium channel 10 (379 aa).

Topologically, residues 1-61 (MTSVAKVYYS…LKDLWTTFID (61 aa)) are cytoplasmic. A 1,2-dioctanoyl-sn-glycero-3-phospho-(1D-myo-inositol-4,5-bisphosphate)-binding site is contributed by arginine 36. The helical transmembrane segment at 62–88 (MQWRYKLLLFSATFAGTWFLFGVVWYL) threads the bilayer. Over 89–114 (VAVAHGDLLELGPPANHTPCVVQVHT) the chain is Extracellular. Cysteine 108 and cysteine 140 are disulfide-bonded. An intramembrane region (discontinuously helical; Pore-forming) is located at residues 115 to 131 (LTGAFLFSLESQTTIGY). Residues 128-133 (TIGYGF) carry the Selectivity filter motif. At 132–140 (GFRYISEEC) the chain is on the extracellular side. Residues 141–166 (PLAIVLLIAQLVLTTILEIFITGTFL) traverse the membrane as a helical segment. Residues 167–379 (AKIARPKKRA…SALSVRISNV (213 aa)) lie on the Cytoplasmic side of the membrane. Lysine 168, arginine 171, and lysine 173 together coordinate 1,2-dioctanoyl-sn-glycero-3-phospho-(1D-myo-inositol-4,5-bisphosphate). 210-217 (GCQVTGKL) contributes to the ATP binding site.

This sequence belongs to the inward rectifier-type potassium channel (TC 1.A.2.1) family. KCNJ10 subfamily. Homotetramer. In kidney cells, it forms heteromeric channels with Kir5.1/KCNJ16; this interaction is required for KCNJ16 localization to the basolateral membrane. Interacts with MAGI1, alone and possibly as a heteromer with KCNJ16; this interaction may facilitate KCNJ10/KCNJ16 potassium channel expression at the basolateral membrane in kidney cells. Interacts with PATJ. Widely expressed in adult brain, including in the neocortex, the stratum pyrimadale of the hippocampus and the piriform cortex. Expressed by cultured astrocytes and also by cocultured cortical neurons (at protein level). In the distal segment of the nephron, expressed in the distal convoluted tubule, the connecting tubule, and the early cortical collecting duct.

Its subcellular location is the membrane. The protein localises to the basolateral cell membrane. The enzyme catalyses K(+)(in) = K(+)(out). With respect to regulation, channel activity is strongly regulated by variations of cytosolic pH; channels are activated by alkaline and inhibited by acidic pH values. Activated by phosphatidylinositol 4,5 biphosphate (PtdIns(4,5)P2). Inhibited by Ba(2+) and Cs(+). Its function is as follows. May be responsible for potassium buffering action of glial cells in the brain. Inward rectifier potassium channels are characterized by a greater tendency to allow potassium to flow into the cell rather than out of it. Their voltage dependence is regulated by the concentration of extracellular potassium; as external potassium is raised, the voltage range of the channel opening shifts to more positive voltages. The inward rectification is mainly due to the blockage of outward current by internal magnesium. Can be blocked by extracellular barium and cesium. In the kidney, together with KCNJ16, mediates basolateral K(+) recycling in distal tubules; this process is critical for Na(+) reabsorption at the tubules. The sequence is that of ATP-sensitive inward rectifier potassium channel 10 from Mus musculus (Mouse).